Consider the following 246-residue polypeptide: DNA repair protein RecO (246 aa).

Belongs to the RecO family.

Its function is as follows. Involved in DNA repair and RecF pathway recombination. In Alkaliphilus metalliredigens (strain QYMF), this protein is DNA repair protein RecO.